Reading from the N-terminus, the 89-residue chain is Small ribosomal subunit protein uS15 (89 aa).

The protein belongs to the universal ribosomal protein uS15 family. As to quaternary structure, part of the 30S ribosomal subunit. Forms a bridge to the 50S subunit in the 70S ribosome, contacting the 23S rRNA.

Functionally, one of the primary rRNA binding proteins, it binds directly to 16S rRNA where it helps nucleate assembly of the platform of the 30S subunit by binding and bridging several RNA helices of the 16S rRNA. In terms of biological role, forms an intersubunit bridge (bridge B4) with the 23S rRNA of the 50S subunit in the ribosome. The polypeptide is Small ribosomal subunit protein uS15 (Pelotomaculum thermopropionicum (strain DSM 13744 / JCM 10971 / SI)).